The primary structure comprises 349 residues: Glycerol-3-phosphate dehydrogenase [NAD(P)+] (349 aa).

NADPH is bound by residues S12, W13, and K107. Positions 107, 138, and 140 each coordinate sn-glycerol 3-phosphate. A142 provides a ligand contact to NADPH. Sn-glycerol 3-phosphate is bound by residues K193, D246, S256, R257, and N258. The active-site Proton acceptor is the K193. R257 contributes to the NADPH binding site. 2 residues coordinate NADPH: V281 and E283.

The protein belongs to the NAD-dependent glycerol-3-phosphate dehydrogenase family.

The protein localises to the cytoplasm. The catalysed reaction is sn-glycerol 3-phosphate + NAD(+) = dihydroxyacetone phosphate + NADH + H(+). It catalyses the reaction sn-glycerol 3-phosphate + NADP(+) = dihydroxyacetone phosphate + NADPH + H(+). Its pathway is membrane lipid metabolism; glycerophospholipid metabolism. Functionally, catalyzes the reduction of the glycolytic intermediate dihydroxyacetone phosphate (DHAP) to sn-glycerol 3-phosphate (G3P), the key precursor for phospholipid synthesis. The polypeptide is Glycerol-3-phosphate dehydrogenase [NAD(P)+] (Pelotomaculum thermopropionicum (strain DSM 13744 / JCM 10971 / SI)).